A 390-amino-acid chain; its full sequence is NADH-dependent butanol dehydrogenase B (390 aa).

The protein belongs to the iron-containing alcohol dehydrogenase family. As to quaternary structure, homodimer.

Its pathway is alcohol metabolism; butanol biosynthesis. The polypeptide is NADH-dependent butanol dehydrogenase B (bdhB) (Clostridium acetobutylicum (strain ATCC 824 / DSM 792 / JCM 1419 / IAM 19013 / LMG 5710 / NBRC 13948 / NRRL B-527 / VKM B-1787 / 2291 / W)).